Here is a 980-residue protein sequence, read N- to C-terminus: Ankycorbin (980 aa).

Met-1 carries the N-acetylmethionine modification. Position 11 is a phosphoserine (Ser-11). ANK repeat units follow at residues Lys-18–Ser-51, Glu-52–Ala-81, Thr-85–Ser-114, Ser-118–Leu-147, Asp-151–Ser-180, Ser-184–Leu-213, and Leu-217–Leu-247. Residues Leu-247–Val-259 are compositionally biased toward basic and acidic residues. The tract at residues Leu-247–Gly-301 is disordered. Residue Thr-249 is modified to Phosphothreonine. The Nuclear localization signal signature appears at Pro-270–Pro-276. Phosphoserine is present on residues Ser-281, Ser-286, and Ser-293. A compositionally biased stretch (polar residues) spans Pro-282–Leu-299. Phosphothreonine occurs at positions 295 and 297. A phosphoserine mark is found at Ser-300, Ser-304, Ser-318, Ser-327, Ser-329, Ser-340, Ser-341, Ser-350, Ser-358, Ser-419, Ser-512, Ser-515, Ser-667, and Ser-915. A coiled-coil region spans residues Leu-349–Ser-374. Positions Tyr-387–Ser-423 are disordered. Residues Thr-425–Arg-947 are a coiled coil.

As to quaternary structure, interacts with PALLD. Associates with actin. However, does not bind F-actin directly. In terms of tissue distribution, highly expressed in placenta, muscle, kidney and testis. Moderately expressed in heart, brain, lung, liver and intestine. Isoform 2 is widely expressed and expressed in fetal and adult testes, and spermatozoa.

The protein resides in the cytoplasm. The protein localises to the cytoskeleton. It localises to the stress fiber. Its subcellular location is the cell cortex. It is found in the cell junction. The protein resides in the nucleus. Its function is as follows. Plays a role in actin regulation at the ectoplasmic specialization, a type of cell junction specific to testis. Important for establishment of sperm polarity and normal spermatid adhesion. May also promote integrity of Sertoli cell tight junctions at the blood-testis barrier. The polypeptide is Ankycorbin (RAI14) (Homo sapiens (Human)).